Consider the following 325-residue polypeptide: Holliday junction branch migration complex subunit RuvB (325 aa).

The large ATPase domain (RuvB-L) stretch occupies residues 1 to 180; the sequence is MKNQLLDAKV…FGIHLKLNFY (180 aa). Residues Leu19, Arg20, Gly61, Lys64, Thr65, Thr66, 127 to 129, Arg170, Tyr180, and Arg217 contribute to the ATP site; that span reads EDF. Thr65 contacts Mg(2+). The small ATPAse domain (RuvB-S) stretch occupies residues 181-251; the sequence is SCEELTKIVE…ITDYALNQLG (71 aa). The head domain (RuvB-H) stretch occupies residues 254–325; sequence KLGLDSSDHK…ITANALKHLH (72 aa). DNA contacts are provided by Arg290, Arg309, and Arg314.

Belongs to the RuvB family. As to quaternary structure, homohexamer. Forms an RuvA(8)-RuvB(12)-Holliday junction (HJ) complex. HJ DNA is sandwiched between 2 RuvA tetramers; dsDNA enters through RuvA and exits via RuvB. An RuvB hexamer assembles on each DNA strand where it exits the tetramer. Each RuvB hexamer is contacted by two RuvA subunits (via domain III) on 2 adjacent RuvB subunits; this complex drives branch migration. In the full resolvosome a probable DNA-RuvA(4)-RuvB(12)-RuvC(2) complex forms which resolves the HJ.

Its subcellular location is the cytoplasm. It carries out the reaction ATP + H2O = ADP + phosphate + H(+). The RuvA-RuvB-RuvC complex processes Holliday junction (HJ) DNA during genetic recombination and DNA repair, while the RuvA-RuvB complex plays an important role in the rescue of blocked DNA replication forks via replication fork reversal (RFR). RuvA specifically binds to HJ cruciform DNA, conferring on it an open structure. The RuvB hexamer acts as an ATP-dependent pump, pulling dsDNA into and through the RuvAB complex. RuvB forms 2 homohexamers on either side of HJ DNA bound by 1 or 2 RuvA tetramers; 4 subunits per hexamer contact DNA at a time. Coordinated motions by a converter formed by DNA-disengaged RuvB subunits stimulates ATP hydrolysis and nucleotide exchange. Immobilization of the converter enables RuvB to convert the ATP-contained energy into a lever motion, pulling 2 nucleotides of DNA out of the RuvA tetramer per ATP hydrolyzed, thus driving DNA branch migration. The RuvB motors rotate together with the DNA substrate, which together with the progressing nucleotide cycle form the mechanistic basis for DNA recombination by continuous HJ branch migration. Branch migration allows RuvC to scan DNA until it finds its consensus sequence, where it cleaves and resolves cruciform DNA. In Orientia tsutsugamushi (strain Ikeda) (Rickettsia tsutsugamushi), this protein is Holliday junction branch migration complex subunit RuvB.